A 95-amino-acid polypeptide reads, in one-letter code: uncharacterized protein (95 aa).

A helical membrane pass occupies residues 12–32; it reads IASLVVSVVVLLIGLILWFFI.

It localises to the cell membrane. This is an uncharacterized protein from Escherichia coli O6:H1 (strain CFT073 / ATCC 700928 / UPEC).